Reading from the N-terminus, the 68-residue chain is Small integral membrane protein 10-like protein 1 (68 aa).

Residues Met1–Pro21 form a disordered region.

This chain is Small integral membrane protein 10-like protein 1, found in Homo sapiens (Human).